The following is a 247-amino-acid chain: PF03932 family protein CutC (247 aa).

Belongs to the CutC family.

The protein resides in the cytoplasm. This is PF03932 family protein CutC from Aliivibrio fischeri (strain MJ11) (Vibrio fischeri).